The primary structure comprises 623 residues: Oviduct-specific glycoprotein (623 aa).

The first 21 residues, 1 to 21 (MWKLLLWVGLVLVLKHHDGAA), serve as a signal peptide directing secretion. One can recognise a GH18 domain in the interval 22–385 (HKLVCYFTNW…YVMNDILVRA (364 aa)). The cysteines at positions 26 and 51 are disulfide-linked. Chitin contacts are provided by residues 71–72 (LQ), 98–101 (GGWN), Y142, 211–214 (LSYD), and W355. Residues N402 and N441 are each glycosylated (N-linked (GlcNAc...) asparagine). Disordered regions lie at residues 539 to 558 (LTPV…VSPG) and 594 to 623 (RKIS…PQDG). Positions 613–623 (TSETGTHPQDG) are enriched in polar residues.

It belongs to the glycosyl hydrolase 18 family. As to expression, oviduct.

The protein localises to the cytoplasmic vesicle. It is found in the secretory vesicle. Its function is as follows. Binds to oocyte zona pellucida in vivo. May play a role in the fertilization process and/or early embryonic development. The protein is Oviduct-specific glycoprotein (OVGP1) of Papio anubis (Olive baboon).